The chain runs to 370 residues: Integrin-linked kinase-associated serine/threonine phosphatase 2C (370 aa).

Methionine 1 is modified (N-acetylmethionine). Residues 1-69 (MDLFGDLPEP…SDEEKNGSEE (69 aa)) are disordered. Serine 13 bears the Phosphoserine mark. The segment covering 33 to 45 (SSGDSGSLDTSLS) has biased composition (low complexity). Positions 46 to 69 (EEVKNEGKGAKRKASDEEKNGSEE) are enriched in basic and acidic residues. Residues 86-368 (KGYVAERKGE…DNVTVMVVRI (283 aa)) form the PPM-type phosphatase domain. 2 residues coordinate Mn(2+): aspartate 130 and glycine 131. Lysine 188 bears the N6-acetyllysine mark. Residues aspartate 304 and aspartate 359 each contribute to the Mn(2+) site.

Belongs to the PP2C family. In terms of assembly, interacts with ILK. It depends on Mg(2+) as a cofactor. Requires Mn(2+) as cofactor.

Its subcellular location is the cytoplasm. It catalyses the reaction O-phospho-L-seryl-[protein] + H2O = L-seryl-[protein] + phosphate. The catalysed reaction is O-phospho-L-threonyl-[protein] + H2O = L-threonyl-[protein] + phosphate. Protein phosphatase that may play a role in regulation of cell cycle progression via dephosphorylation of its substrates whose appropriate phosphorylation states might be crucial for cell proliferation. Selectively associates with integrin linked kinase (ILK), to modulate cell adhesion and growth factor signaling. Inhibits the ILK-GSK3B signaling axis and may play an important role in inhibiting oncogenic transformation. The sequence is that of Integrin-linked kinase-associated serine/threonine phosphatase 2C (ILKAP) from Bos taurus (Bovine).